A 595-amino-acid polypeptide reads, in one-letter code: Putative histone-lysine N-methyltransferase PRDM6 (595 aa).

A disordered region spans residues 27 to 90 (FPHGGAGPLK…STPASSSTSA (64 aa)). Gly residues predominate over residues 30-40 (GGAGPLKGSGA). Pro residues predominate over residues 49–59 (PLQPPPPPPPP). The segment covering 71-90 (PRPASLSSASSTPASSSTSA) has biased composition (low complexity). The SET domain occupies 246–365 (REVCLCTSTV…RGTELLVWYN (120 aa)). A C2H2-type 1; degenerate zinc finger spans residues 473-495 (WKCGQCFKTFTQRILLQMHVCTQ). 2 consecutive C2H2-type zinc fingers follow at residues 501–523 (YQCG…VVTH) and 529–551 (FKCG…IRTH). The C2H2-type 4; degenerate zinc-finger motif lies at 557–579 (FKCERCERSFTQATQLSRHQRMP).

The protein belongs to the class V-like SAM-binding methyltransferase superfamily. As to quaternary structure, interacts with HDAC1, HDAC2, HDAC3, CBX1 and EP300.

It is found in the nucleus. It carries out the reaction L-lysyl(20)-[histone H4] + S-adenosyl-L-methionine = N(6)-methyl-L-lysyl(20)-[histone H4] + S-adenosyl-L-homocysteine + H(+). Putative histone methyltransferase that acts as a transcriptional repressor of smooth muscle gene expression. Promotes the transition from differentiated to proliferative smooth muscle by suppressing differentiation and maintaining the proliferative potential of vascular smooth muscle cells. Also plays a role in endothelial cells by inhibiting endothelial cell proliferation, survival and differentiation. It is unclear whether it has histone methyltransferase activity in vivo. According to some authors, it does not act as a histone methyltransferase by itself and represses transcription by recruiting EHMT2/G9a. According to others, it possesses histone methyltransferase activity when associated with other proteins and specifically methylates 'Lys-20' of histone H4 in vitro. 'Lys-20' methylation represents a specific tag for epigenetic transcriptional repression. In Homo sapiens (Human), this protein is Putative histone-lysine N-methyltransferase PRDM6 (PRDM6).